A 397-amino-acid polypeptide reads, in one-letter code: Zinc finger CCCH domain-containing protein 33 (397 aa).

C3H1-type zinc fingers lie at residues 40-68 (RPGEPDCSYYIRTGLCRFGSTCRFNHPRD), 85-113 (RIGQPECEYYLKTGTCKFGVTCKFHHPRN), 131-159 (RSNEVDCAYFLRTGHCKFGGTCKFNHPQP), 274-302 (RPGQPECQFYMKTGDCKFGTVCKFHHPRD), and 320-348 (RPGEPLCVFYTRYGICKFGPSCKFDHPMR). The disordered stretch occupies residues 361 to 397 (EVVETSTGKSRRLSVSETRQAATTSSGKDTTIDNTQQ). Residues 364–397 (ETSTGKSRRLSVSETRQAATTSSGKDTTIDNTQQ) show a composition bias toward polar residues.

The protein localises to the nucleus. This chain is Zinc finger CCCH domain-containing protein 33 (ZFN1), found in Arabidopsis thaliana (Mouse-ear cress).